Here is a 913-residue protein sequence, read N- to C-terminus: MAGNVKKSSGAGGGGSGGSGAGGLIGLMKDAFQPHHHHHHLSPHPPCTVDKKMVEKCWKLMDKVVRLCQNPKLALKNSPPYILDLLPDTYQHLRTVLSRYEGKMETLGENEYFRVFMENLMKKTKQTISLFKEGKERMYEENSQPRRNLTKLSLIFSHMLAELKGIFPSGLFQGDTFRITKADAAEFWRKAFGEKTIVPWKSFRQALHEVHPISSGLEAMALKSTIDLTCNDYISVFEFDIFTRLFQPWSSLLRNWNSLAVTHPGYMAFLTYDEVKARLQKFIHKPGSYIFRLSCTRLGQWAIGYVTADGNILQTIPHNKPLFQALIDGFREGFYLFPDGRNQNPDLTGLCEPTPQDHIKVTQEQYELYCEMGSTFQLCKICAENDKDVKIEPCGHLMCTSCLTSWQESEGQGCPFCRCEIKGTEPIVVDPFDPRGSGSLLRQGAEGAPSPNYDDDDDERADDSLFMMKELAGAKVERPSSPFSMAPQASLPPVPPRLDLLQQRAPVPASTSVLGTASKAASGSLHKDKPLPIPPTLRDLPPPPPPDRPYSVGAETRPQRRPLPCTPGDCPSRDKLPPVPSSRPGDSWLSRPIPKVPVATPNPGDPWNGRELTNRHSLPFSLPSQMEPRADVPRLGSTFSLDTSMTMNSSPVAGPESEHPKIKPSSSANAIYSLAARPLPMPKLPPGEQGESEEDTEYMTPTSRPVGVQKPEPKRPLEATQSSRACDCDQQIDSCTYEAMYNIQSQALSVAENSASGEGNLATAHTSTGPEESENEDDGYDVPKPPVPAVLARRTLSDISNASSSFGWLSLDGDPTNFNEGSQVPERPPKPFPRRINSERKASSYQQGGGATANPVATAPSPQLSSEIERLMSQGYSYQDIQKALVIAHNNIEMAKNILREFVSISSPAHVAT.

Residues 1-355 are sufficient for interaction with EPHB1; that stretch reads MAGNVKKSSG…DLTGLCEPTP (355 aa). Residues 45–173 are 4H; the sequence is PPCTVDKKMV…KGIFPSGLFQ (129 aa). Positions 45 to 349 constitute a Cbl-PTB domain; that stretch reads PPCTVDKKMV…GRNQNPDLTG (305 aa). The interval 174–246 is EF-hand-like; sequence GDTFRITKAD…FEFDIFTRLF (73 aa). Ca(2+) contacts are provided by Asp227, Thr229, Asn231, Tyr233, and Glu238. The SH2-like stretch occupies residues 247–349; sequence QPWSSLLRNW…GRNQNPDLTG (103 aa). Arg292 contacts 4-O-phospho-L-tyrosine. Residues 350–378 are linker; the sequence is LCEPTPQDHIKVTQEQYELYCEMGSTFQL. Residues 356-913 form a required for ubiquitination of SPRED2 region; it reads QDHIKVTQEQ…SISSPAHVAT (558 aa). Phosphotyrosine is present on Tyr369. The RING-type zinc finger occupies 379-418; that stretch reads CKICAENDKDVKIEPCGHLMCTSCLTSWQESEGQGCPFCR. Disordered regions lie at residues 430-460 and 476-613; these read DPFD…DDER and VERP…RELT. Phosphoserine occurs at positions 437, 450, and 481. Polar residues predominate over residues 509 to 521; sequence ASTSVLGTASKAA. Positions 531-548 are enriched in pro residues; sequence LPIPPTLRDLPPPPPPDR. Ser617, Ser640, Ser666, and Ser667 each carry phosphoserine. The interval 646–913 is interaction with CD2AP; the sequence is TMNSSPVAGP…SISSPAHVAT (268 aa). Residues 647–727 are disordered; it reads MNSSPVAGPE…EATQSSRACD (81 aa). Position 672 is a phosphotyrosine (Tyr672). Ser692 carries the post-translational modification Phosphoserine. Tyr698 is subject to Phosphotyrosine; by ABL1. The residue at position 737 (Tyr737) is a Phosphotyrosine; by SRC. The segment covering 750 to 770 has biased composition (polar residues); it reads VAENSASGEGNLATAHTSTGP. 2 disordered regions span residues 750-787 and 814-863; these read VAEN…KPPV and DPTN…PSPQ. Over residues 771 to 780 the composition is skewed to acidic residues; the sequence is EESENEDDGY. Phosphotyrosine is present on Tyr780. The region spanning 863–902 is the UBA domain; the sequence is QLSSEIERLMSQGYSYQDIQKALVIAHNNIEMAKNILREF. Ser907 bears the Phosphoserine mark.

As to quaternary structure, forms homodimers; IFT20 promotes the formation of stable homodimers. Interacts (phosphorylated) with PIK3R1. Interacts with phosphorylated LAT2. Associates with NCK via its SH3 domain. The phosphorylated C-terminus interacts with CD2AP via its second SH3 domain. Binds to UBE2L3. Interacts with adapters SLA, SLA2 and with the phosphorylated C-terminus of SH2B2. Interacts with EGFR, SYK and ZAP70 via the highly conserved Cbl-N region. Interacts with FGR. Also interacts with BLK, SORBS1 and INPPL1/SHIP2. Interacts with CBLB. Interacts with TEK/TIE2 (tyrosine phosphorylated). Interacts with ALK, AXL and FGFR2. Interacts with CSF1R, EPHB1, FLT1, KDR, PDGFRA and PDGFRB; regulates receptor degradation through ubiquitination. Interacts with HCK and LYN. Interacts with ATX2. Interacts with SH3KBP1 and this interaction is inhibited in the presence of SHKBP1 or ARAP1. Interacts with SIGLEC10. Interacts with IFT20. Interacts with SPRY2; the interaction inhibits CBL-mediated ubiquitination of EGFR. Interacts (phosphorylated at Tyr-780) with tensin TNS4 (via SH2 domain); the interaction is enhanced in the presence of EGF and reduces interaction of CBL with EGFR. Interacts with EGFR; the interaction is reduced in the presence of TNS4. Interacts with CD5. Interacts with CD93. Post-translationally, phosphorylated on tyrosine residues by ALK, EGFR, FGR, INSR, SYK, FYN and ZAP70. Phosphorylated on several tyrosine residues by constitutively activated FGFR3. Phosphorylated on tyrosine residues by activated PDGFRA and PDGFRB. Phosphorylated on tyrosine residues in response to CSF1R, FLT1 and KIT signaling. Phosphorylated on tyrosine residues by HCK. Ubiquitinated, leading to its degradation via the proteasome. Ubiquitination is negatively regulated by IFT20.

The protein localises to the cytoplasm. It is found in the cell membrane. It localises to the cell projection. Its subcellular location is the cilium. The protein resides in the golgi apparatus. It carries out the reaction S-ubiquitinyl-[E2 ubiquitin-conjugating enzyme]-L-cysteine + [acceptor protein]-L-lysine = [E2 ubiquitin-conjugating enzyme]-L-cysteine + N(6)-ubiquitinyl-[acceptor protein]-L-lysine.. It functions in the pathway protein modification; protein ubiquitination. Its function is as follows. E3 ubiquitin-protein ligase that acts as a negative regulator of many signaling pathways by mediating ubiquitination of cell surface receptors. Accepts ubiquitin from specific E2 ubiquitin-conjugating enzymes, and then transfers it to substrates promoting their degradation by the proteasome. Recognizes activated receptor tyrosine kinases, including KIT, FLT1, FGFR1, FGFR2, PDGFRA, PDGFRB, CSF1R, EPHA8 and KDR and mediates their ubiquitination to terminate signaling. Recognizes membrane-bound HCK, SRC and other kinases of the SRC family and mediates their ubiquitination and degradation. Ubiquitinates EGFR and SPRY2. Ubiquitinates NECTIN1 following association between NECTIN1 and herpes simplex virus 1/HHV-1 envelope glycoprotein D, leading to NECTIN1 removal from cell surface. Participates in signal transduction in hematopoietic cells. Plays an important role in the regulation of osteoblast differentiation and apoptosis. Essential for osteoclastic bone resorption. The 'Tyr-731' phosphorylated form induces the activation and recruitment of phosphatidylinositol 3-kinase to the cell membrane in a signaling pathway that is critical for osteoclast function. May be functionally coupled with the E2 ubiquitin-protein ligase UB2D3. In association with CBLB, required for proper feedback inhibition of ciliary platelet-derived growth factor receptor-alpha (PDGFRA) signaling pathway via ubiquitination and internalization of PDGFRA. The protein is E3 ubiquitin-protein ligase CBL (Cbl) of Mus musculus (Mouse).